The following is a 443-amino-acid chain: RILP-like protein homolog (443 aa).

An RH1 domain is found at 8-96 (EMGEMVLDAI…ESEKLEKAEF (89 aa)). Residues 59–315 (LELLEALATK…TLNEQLAELK (257 aa)) adopt a coiled-coil conformation. Residues 282–401 (RPRYTTRELK…KSSESGIRKF (120 aa)) form the RH2 domain. The disordered stretch occupies residues 311–394 (LAELKPPSQA…PDDAPWKKSS (84 aa)). Over residues 332–355 (DDSDEDDDGHVADNDDDDDEEEAA) the composition is skewed to acidic residues. Residues 356-368 (AEANELEPPAAGE) show a composition bias toward low complexity.

The protein belongs to the RILPL family. Interacts with Arl8 (in GTP-bound form).

The protein resides in the lysosome membrane. Its function is as follows. May have a role in lysosome distribution by interacting with Arl8. In Drosophila melanogaster (Fruit fly), this protein is RILP-like protein homolog.